Reading from the N-terminus, the 353-residue chain is Photosystem II D2 protein (353 aa).

The residue at position 2 (Thr2) is an N-acetylthreonine. Thr2 carries the post-translational modification Phosphothreonine. The helical transmembrane segment at 41–61 (CAYFALGGWFTGTTFVTSWYT) threads the bilayer. Chlorophyll a is bound at residue His118. The helical transmembrane segment at 125-141 (GFMLRQFELARSVQLRP) threads the bilayer. Positions 130 and 143 each coordinate pheophytin a. The helical transmembrane segment at 153 to 166 (VFVSVFLIYPLGQS) threads the bilayer. Chlorophyll a is bound at residue His198. A helical membrane pass occupies residues 208–228 (AALLCAIHGATVENTLFEDGD). A plastoquinone-binding residues include His215 and Phe262. Residue His215 participates in Fe cation binding. His269 is a binding site for Fe cation. A helical membrane pass occupies residues 279-295 (GLWMSAIGVVGLALNLR).

This sequence belongs to the reaction center PufL/M/PsbA/D family. In terms of assembly, PSII is composed of 1 copy each of membrane proteins PsbA, PsbB, PsbC, PsbD, PsbE, PsbF, PsbH, PsbI, PsbJ, PsbK, PsbL, PsbM, PsbT, PsbX, PsbY, PsbZ, Psb30/Ycf12, at least 3 peripheral proteins of the oxygen-evolving complex and a large number of cofactors. It forms dimeric complexes. The D1/D2 heterodimer binds P680, chlorophylls that are the primary electron donor of PSII, and subsequent electron acceptors. It shares a non-heme iron and each subunit binds pheophytin, quinone, additional chlorophylls, carotenoids and lipids. There is also a Cl(-1) ion associated with D1 and D2, which is required for oxygen evolution. The PSII complex binds additional chlorophylls, carotenoids and specific lipids. serves as cofactor.

Its subcellular location is the plastid. The protein localises to the chloroplast thylakoid membrane. The catalysed reaction is 2 a plastoquinone + 4 hnu + 2 H2O = 2 a plastoquinol + O2. Functionally, photosystem II (PSII) is a light-driven water:plastoquinone oxidoreductase that uses light energy to abstract electrons from H(2)O, generating O(2) and a proton gradient subsequently used for ATP formation. It consists of a core antenna complex that captures photons, and an electron transfer chain that converts photonic excitation into a charge separation. The D1/D2 (PsbA/PsbD) reaction center heterodimer binds P680, the primary electron donor of PSII as well as several subsequent electron acceptors. D2 is needed for assembly of a stable PSII complex. The chain is Photosystem II D2 protein from Agrostis stolonifera (Creeping bentgrass).